Consider the following 1433-residue polypeptide: Probable ATP-dependent RNA helicase spindle-E (1433 aa).

Residues 76–98 are disordered; the sequence is NRTLDELDSDDEEENMQEQPSVR. Over residues 81–91 the composition is skewed to acidic residues; the sequence is ELDSDDEEENM. The Helicase ATP-binding domain maps to 127–294; the sequence is MKAIRENPVV…FATSSAFPPV (168 aa). 140–147 provides a ligand contact to ATP; it reads GETGCGKT. Positions 240–243 match the DEAH box motif; the sequence is DEVH. Residues 354 to 526 form the Helicase C-terminal domain; sequence QSLQSYEEAK…NSVLKAKELE (173 aa). Residues 937 to 1000 enclose the Tudor domain; that stretch reads ASAVTKGLQL…RLMPHELKRD (64 aa).

The protein belongs to the DEAD box helicase family. DEAH subfamily.

Its subcellular location is the cytoplasm. The enzyme catalyses ATP + H2O = ADP + phosphate + H(+). In terms of biological role, probable ATP-binding RNA helicase which plays a central role during spermatogenesis and oogenesis by repressing transposable elements and preventing their mobilization, which is essential for the germline integrity. Acts via the piRNA metabolic process, which mediates the repression of transposable elements during meiosis by forming complexes composed of piRNAs and Piwi and govern the methylation and subsequent repression of transposons. Involved in the repression of LTR retrotransposon copia. Also involved in telomere regulation by repressing specialized telomeric retroelements HeT-A, TAHRE, and TART; Drosophila telomeres being maintained by transposition of specialized telomeric retroelements. Involved in telomeric trans-silencing, a repression mechanism by which a transposon or a transgene inserted in subtelomeric heterochromatin has the capacity to repress in trans in the female germline, a homologous transposon, or transgene located in euchromatin. Involved in the repression of testis-expressed Stellate genes by the homologous Su(Ste) repeats. Required for anteroposterior and dorsoventral axis formation during oogenesis. The chain is Probable ATP-dependent RNA helicase spindle-E (spn-E) from Drosophila virilis (Fruit fly).